The chain runs to 271 residues: Phosphate import ATP-binding protein PstB 1 (271 aa).

In terms of domain architecture, ABC transporter spans 24–266 (MIGKDVSVYY…PDDPRTQDYI (243 aa)). 56–63 (GPSGCGKS) provides a ligand contact to ATP.

It belongs to the ABC transporter superfamily. Phosphate importer (TC 3.A.1.7) family. The complex is composed of two ATP-binding proteins (PstB), two transmembrane proteins (PstC and PstA) and a solute-binding protein (PstS).

Its subcellular location is the cell inner membrane. The enzyme catalyses phosphate(out) + ATP + H2O = ADP + 2 phosphate(in) + H(+). Part of the ABC transporter complex PstSACB involved in phosphate import. Responsible for energy coupling to the transport system. The protein is Phosphate import ATP-binding protein PstB 1 of Rhizobium johnstonii (strain DSM 114642 / LMG 32736 / 3841) (Rhizobium leguminosarum bv. viciae).